Consider the following 452-residue polypeptide: Elongation factor Tu, mitochondrial (452 aa).

Residues Met1 to Leu43 constitute a mitochondrion transit peptide. One can recognise a tr-type G domain in the interval Lys55–Thr251. The interval Gly64 to Thr71 is G1. The GTP site is built by Asp67, Gly69, Lys70, Thr71, and Thr72. Thr71 provides a ligand contact to Mg(2+). Lys79 is subject to N6-acetyllysine. Lys88 is subject to N6-acetyllysine; alternate. An N6-succinyllysine; alternate modification is found at Lys88. A G2 region spans residues Gly105–Asn109. The interval Asp126–Gly129 is G3. GTP-binding residues include Asn181, Asp184, Ser219, Ala220, and Leu221. The tract at residues Asn181–Asp184 is G4. The G5 stretch occupies residues Ser219–Leu221. Position 234 is an N6-succinyllysine (Lys234). Lys256 bears the N6-acetyllysine mark. Thr278 carries the post-translational modification Phosphothreonine. Lys286 carries the post-translational modification N6-succinyllysine. Residue Ser312 is modified to Phosphoserine. Residues Lys361 and Lys418 each carry the N6-acetyllysine modification.

The protein belongs to the TRAFAC class translation factor GTPase superfamily. Classic translation factor GTPase family. EF-Tu/EF-1A subfamily. In terms of assembly, interacts with NLRX1. Interacts with ATG16L1.

The protein localises to the mitochondrion. The catalysed reaction is GTP + H2O = GDP + phosphate + H(+). Functionally, GTP hydrolase that promotes the GTP-dependent binding of aminoacyl-tRNA to the A-site of ribosomes during protein biosynthesis. Also plays a role in the regulation of autophagy and innate immunity. Recruits ATG5-ATG12 and NLRX1 at mitochondria and serves as a checkpoint of the RIGI-MAVS pathway. In turn, inhibits RLR-mediated type I interferon while promoting autophagy. The sequence is that of Elongation factor Tu, mitochondrial (TUFM) from Bos taurus (Bovine).